A 536-amino-acid polypeptide reads, in one-letter code: Global nitrogen regulator NrpR (536 aa).

The segment at 7-72 (VEILSILSEA…EITEKGIEEL (66 aa)) is winged helix-turn-helix. NRD regions lie at residues 80–314 (RIGS…KGKF) and 315–536 (KVTP…YDDI).

Belongs to the NrpR family. In terms of assembly, homotetramer. Binds to a single operator as a dimer and cooperatively to two operators as a dimer pair.

Under nitrogen limitation, binding of the intracellular nitrogen metabolite 2-oxoglutarate to NrpR decreases the binding affinity of NrpR to DNA, leading to initiation of transcription. Transcriptional repressor of nitrogen fixation and assimilation genes. Binds to two tandem operators in the glnA and nif promoters, thereby blocking transcription of the genes. The chain is Global nitrogen regulator NrpR from Methanococcus maripaludis (strain DSM 14266 / JCM 13030 / NBRC 101832 / S2 / LL).